The sequence spans 398 residues: NADH-quinone oxidoreductase subunit D (398 aa).

This sequence belongs to the complex I 49 kDa subunit family. In terms of assembly, NDH-1 is composed of 14 different subunits. Subunits NuoB, C, D, E, F, and G constitute the peripheral sector of the complex.

The protein resides in the cell inner membrane. The catalysed reaction is a quinone + NADH + 5 H(+)(in) = a quinol + NAD(+) + 4 H(+)(out). Its function is as follows. NDH-1 shuttles electrons from NADH, via FMN and iron-sulfur (Fe-S) centers, to quinones in the respiratory chain. The immediate electron acceptor for the enzyme in this species is believed to be ubiquinone. Couples the redox reaction to proton translocation (for every two electrons transferred, four hydrogen ions are translocated across the cytoplasmic membrane), and thus conserves the redox energy in a proton gradient. The chain is NADH-quinone oxidoreductase subunit D from Bradyrhizobium sp. (strain ORS 278).